A 202-amino-acid chain; its full sequence is LexA repressor (202 aa).

Residues Val-29–Glu-49 constitute a DNA-binding region (H-T-H motif). Catalysis depends on for autocatalytic cleavage activity residues Ser-125 and Lys-162.

Belongs to the peptidase S24 family. As to quaternary structure, homodimer.

The catalysed reaction is Hydrolysis of Ala-|-Gly bond in repressor LexA.. Its function is as follows. Represses a number of genes involved in the response to DNA damage (SOS response), including recA and lexA. In the presence of single-stranded DNA, RecA interacts with LexA causing an autocatalytic cleavage which disrupts the DNA-binding part of LexA, leading to derepression of the SOS regulon and eventually DNA repair. This Clostridium kluyveri (strain NBRC 12016) protein is LexA repressor.